Here is a 770-residue protein sequence, read N- to C-terminus: ARF GTPase-activating protein GIT1 (770 aa).

Residues Met1–Asp124 enclose the Arf-GAP domain. The interaction with gamma-tubulin and localization to the centrosome stretch occupies residues Met1–Asp124. The segment at Cys11–Cys34 adopts a C4-type zinc-finger fold. 3 ANK repeats span residues Asp132–Phe161, Lys166–Ser195, and Asn199–Asp228. Tyr224 is modified (phosphotyrosine). The interval His245–Asp374 is interaction with PCLO. The segment at Asp253–Asp424 is interaction with PTK2/FAK1. An interaction with ARHGEF7 region spans residues Arg254–Leu376. Residues Arg363–Leu425 are disordered. A compositionally biased stretch (polar residues) spans Gly366–Gln383. Ser368 and Ser371 each carry phosphoserine. Thr373 carries the phosphothreonine modification. Positions Asn375–Leu596 are interaction with NCK2 and GRIN3A. The interval Asn375–Leu596 is required for localization at synapses. 2 positions are modified to phosphoserine: Ser379 and Ser384. Tyr392 carries the phosphotyrosine modification. Ser394 and Ser397 each carry phosphoserine. The span at Ser394–Gln403 shows a compositional bias: acidic residues. Thr401 is subject to Phosphothreonine. Phosphoserine is present on residues Ser419, Ser422, and Ser426. An interaction with MAPK1 region spans residues Met420–Ala475. The segment at Ala429–Lys629 is interaction with IKBKG. Residues Val449 to Pro483 are a coiled coil. Ser507 and Ser545 each carry phosphoserine. Thr546 bears the Phosphothreonine mark. 2 positions are modified to phosphotyrosine: Tyr554 and Tyr563. Residues Ser570, Ser580, Ser601, and Ser605 each carry the phosphoserine modification. Positions Pro578–Glu588 are enriched in polar residues. The disordered stretch occupies residues Pro578–Pro615. A Phosphothreonine modification is found at Thr610. Position 639 is a phosphoserine (Ser639). An interaction with PXN and TGFB1I1 region spans residues Pro646 to Gln770.

As to quaternary structure, forms homodimers and possibly oligomers. May forms heterooligomers with GIT2. Interacts with G protein-coupled receptor kinases, including GRK2, GRK3, GRK5 and GRK6. Interacts with PPFIA1, PPFIA2 and PPFIA4. Interacts with GRIP1 and forms a ternary complex with PPFIA1 and GRIP1. Directly interacts with ARHGEF7/beta-PIX, forming in vitro a heptameric complex made of a GIT1 dimer and an ARHGEF7 trimer. Directly interacts with PXN/paxillin; this interaction is enhanced in the presence of ARHGEF7. Directly interacts (via C-terminus) with TGFB1I1/Hic-5 (via LD motif 3). Directly interacts with PTK2/FAK1. May interact with PTK2B/PYK2; this interaction may be indirect. Interacts with AMPA receptors GRIA2/3. Directly interacts with protein Piccolo/PCLO. Forms a complex with Ephrin-B1/EFNB1 and NCK2/GRB4 (via SH2); this interaction is important for spine morphogenesis and synapse formation. Interaction with NCK2 is transient and depends upon GIT1 phosphorylation at Tyr-392. Interacts with GRIN3A/GluN3A (via C-terminus); this interaction competes with GIT1 interaction with ARHGEF7 and limits synaptic localization of GIT1. Interacts with IKBKG/NEMO in resting bone mesenchymal stem cells, as well as in TNF-stimulated cells; this interaction may increase IKBKG affinity for 'Lys-63'-linked polyubiquitin chains. Interacts with GABA(A) receptors, including GABRB3 and GABRG2. Interacts with SCRIB. Interacts (via N- and C-terminus) with ENTR1/SDCCAG3 (via N-terminus); this interaction is direct. May form a tripartite complex with ENTR1 and PTPN13. Interacts with YWHAZ. Interacts with PAK1. Interacts with PAK3. Directly interacts (via N-terminus) with gamma-tubulin. Interacts with MAPK1 and MAPK3; this interaction is required for MAPK1/3 recruitment to focal adhesions. Phosphorylated on tyrosine residues by PTK2/FAK1 and SRC in growing fibroblasts. Phosphorylation at Tyr-392 is induced by activation of Ephrin-B1/EFNB1 and catalyzed by SRC family kinases. It is required for the interaction with NCK2 and for GIT1 recruitment to synapses in hippocampal neurons. Expressed in the brain (at protein level). Also expressed at high levels in lung and heart. In lung, expressed in endothelial cells, especially in capillaries; also expressed in smooth muscle and epithelial cells of bronchi (at protein level). Expressed in bone marrow mesenchymal stem cells, as well as in osteoclasts and bone marrow-derived macrophages (at protein level).

It is found in the cytoplasm. Its subcellular location is the presynapse. The protein resides in the postsynapse. The protein localises to the postsynaptic density. It localises to the cell junction. It is found in the focal adhesion. Its subcellular location is the cell projection. The protein resides in the lamellipodium. The protein localises to the cytoskeleton. It localises to the microtubule organizing center. It is found in the centrosome. Its subcellular location is the spindle pole. GTPase-activating protein for ADP ribosylation factor family members, including ARF1. Multidomain scaffold protein that interacts with numerous proteins and therefore participates in many cellular functions, including receptor internalization, focal adhesion remodeling, and signaling by both G protein-coupled receptors and tyrosine kinase receptors. Through PAK1 activation, positively regulates microtubule nucleation during interphase. Plays a role in the regulation of cytokinesis; for this function, may act in a pathway also involving ENTR1 and PTPN13. May promote cell motility both by regulating focal complex dynamics and by the activation of RAC1. May act as scaffold for MAPK1/3 signal transduction, recruiting MAPK1/3 to focal adhesions after EGF stimulation via a Src-dependent pathway, hence stimulating cell migration. Plays a role in brain development and function. Involved in the regulation of spine density and synaptic plasticity that is required for processes involved in learning. Plays an important role in dendritic spine morphogenesis and synapse formation. In hippocampal neurons, recruits guanine nucleotide exchange factors (GEFs), such as ARHGEF7/beta-PIX, to the synaptic membrane. These in turn locally activate RAC1, which is an essential step for spine morphogenesis and synapse formation. May contribute to the organization of presynaptic active zones through oligomerization and formation of a Piccolo/PCLO-based protein network, which includes ARHGEF7/beta-PIX and FAK1. In neurons, through its interaction with liprin-alpha family members, may be required for AMPA receptor (GRIA2/3) proper targeting to the cell membrane. In complex with GABA(A) receptors and ARHGEF7, plays a crucial role in regulating GABA(A) receptor synaptic stability, maintaining GPHN/gephyrin scaffolds and hence GABAergic inhibitory synaptic transmission, by locally coordinating RAC1 and PAK1 downstream effector activity, leading to F-actin stabilization. May also be important for RAC1 downstream signaling pathway through PAK3 and regulation of neuronal inhibitory transmission at presynaptic input. Required for successful bone regeneration during fracture healing. The function in intramembranous ossification may, at least partly, exerted by macrophages in which GIT1 is a key negative regulator of redox homeostasis, IL1B production, and glycolysis, acting through the ERK1/2/NRF2/NFE2L2 axis. May play a role in angiogenesis during fracture healing. In this process, may regulate activation of the canonical NF-kappa-B signal in bone mesenchymal stem cells by enhancing the interaction between NEMO and 'Lys-63'-ubiquitinated RIPK1/RIP1, eventually leading to enhanced production of VEGFA and others angiogenic factors. Essential for VEGF signaling through the activation of phospholipase C-gamma and ERK1/2, hence may control endothelial cell proliferation and angiogenesis. The sequence is that of ARF GTPase-activating protein GIT1 (Git1) from Mus musculus (Mouse).